A 349-amino-acid polypeptide reads, in one-letter code: Sterol-4-alpha-carboxylate 3-dehydrogenase ERG26, decarboxylating (349 aa).

NADP(+) is bound by residues Gly11 to Gly17, Asp62 to Leu63, and Cys84 to Ser86. 2 residues coordinate substrate: Ser124 and Tyr151. NADP(+) contacts are provided by residues Tyr151, Lys155, and Pro179–Ile182. The active-site Proton donor is Lys155.

It belongs to the 3-beta-HSD family. As to quaternary structure, heterotetramer of ERG25, ERG26, ERG27 and ERG28. ERG28 acts as a scaffold to tether ERG27 and other 4,4-demethylation-related enzymes, forming a demethylation enzyme complex, in the endoplasmic reticulum.

It localises to the endoplasmic reticulum membrane. It carries out the reaction 4beta-methylzymosterol-4alpha-carboxylate + NADP(+) = 3-dehydro-4-methylzymosterol + CO2 + NADPH. The protein operates within steroid biosynthesis; zymosterol biosynthesis; zymosterol from lanosterol: step 4/6. Inhibited by FR171456, a natural product with broad antifungal activity. Its function is as follows. Sterol-4-alpha-carboxylate 3-dehydrogenase; part of the third module of ergosterol biosynthesis pathway that includes the late steps of the pathway. ERG26 is a catalytic component of the C-4 demethylation complex that catalyzes the oxidative decarboxylation that results in a reduction of the 3-beta-hydroxy group at the C-3 carbon to an oxo group. The third module or late pathway involves the ergosterol synthesis itself through consecutive reactions that mainly occur in the endoplasmic reticulum (ER) membrane. Firstly, the squalene synthase ERG9 catalyzes the condensation of 2 farnesyl pyrophosphate moieties to form squalene, which is the precursor of all steroids. Squalene synthase is crucial for balancing the incorporation of farnesyl diphosphate (FPP) into sterol and nonsterol isoprene synthesis. Secondly, the squalene epoxidase ERG1 catalyzes the stereospecific oxidation of squalene to (S)-2,3-epoxysqualene, which is considered to be a rate-limiting enzyme in steroid biosynthesis. Then, the lanosterol synthase ERG7 catalyzes the cyclization of (S)-2,3 oxidosqualene to lanosterol, a reaction that forms the sterol core. In the next steps, lanosterol is transformed to zymosterol through a complex process involving various demethylation, reduction and desaturation reactions. The lanosterol 14-alpha-demethylase ERG11 (also known as CYP51) catalyzes C14-demethylation of lanosterol to produce 4,4'-dimethyl cholesta-8,14,24-triene-3-beta-ol, which is critical for ergosterol biosynthesis. The C-14 reductase ERG24 reduces the C14=C15 double bond of 4,4-dimethyl-cholesta-8,14,24-trienol to produce 4,4-dimethyl-cholesta-8,24-dienol. 4,4-dimethyl-cholesta-8,24-dienol is substrate of the C-4 demethylation complex ERG25-ERG26-ERG27 in which ERG25 catalyzes the three-step monooxygenation required for the demethylation of 4,4-dimethyl and 4alpha-methylsterols, ERG26 catalyzes the oxidative decarboxylation that results in a reduction of the 3-beta-hydroxy group at the C-3 carbon to an oxo group, and ERG27 is responsible for the reduction of the keto group on the C-3. ERG28 has a role as a scaffold to help anchor ERG25, ERG26 and ERG27 to the endoplasmic reticulum and ERG29 regulates the activity of the iron-containing C4-methylsterol oxidase ERG25. Then, the sterol 24-C-methyltransferase ERG6 catalyzes the methyl transfer from S-adenosyl-methionine to the C-24 of zymosterol to form fecosterol. The C-8 sterol isomerase ERG2 catalyzes the reaction which results in unsaturation at C-7 in the B ring of sterols and thus converts fecosterol to episterol. The sterol-C5-desaturase ERG3 then catalyzes the introduction of a C-5 double bond in the B ring to produce 5-dehydroepisterol. The C-22 sterol desaturase ERG5 further converts 5-dehydroepisterol into ergosta-5,7,22,24(28)-tetraen-3beta-ol by forming the C-22(23) double bond in the sterol side chain. Finally, ergosta-5,7,22,24(28)-tetraen-3beta-ol is substrate of the C-24(28) sterol reductase ERG4 to produce ergosterol. The polypeptide is Sterol-4-alpha-carboxylate 3-dehydrogenase ERG26, decarboxylating (Saccharomyces cerevisiae (strain ATCC 204508 / S288c) (Baker's yeast)).